The primary structure comprises 517 residues: AAA ATPase forming ring-shaped complexes (517 aa).

Residues 25–53 (ARNAKLVELLQASRTKLEEINGRLEALAE) are a coiled coil. Residue 233–238 (GNGKTL) coordinates ATP.

The protein belongs to the AAA ATPase family. As to quaternary structure, homohexamer. Assembles into a hexameric ring structure.

This Corynebacterium jeikeium (strain K411) protein is AAA ATPase forming ring-shaped complexes.